Reading from the N-terminus, the 296-residue chain is DNA repair protein complementing XP-A cells homolog (296 aa).

Polar residues predominate over residues 1–10 (MSAEVSTNES). Positions 1-39 (MSAEVSTNESAPPAEKKSKLTNAQKARIERNQAKAQKLR) are disordered. Basic and acidic residues predominate over residues 26 to 39 (ARIERNQAKAQKLR). The Nuclear localization signal motif lies at 26–47 (ARIERNQAKAQKLREAKLVSHP). Residues C126, C129, C147, and C150 each contribute to the Zn(2+) site. Residues 126–150 (CLECGDMFADSYLFNNFGHSVCDKC) fold into a zinc finger.

The protein belongs to the XPA family. In terms of tissue distribution, strongly expressed in the central nervous system and muscles.

Its subcellular location is the nucleus. Its function is as follows. Involved in DNA excision repair. Initiates repair by binding to damaged sites with various affinities, depending on the photoproduct and the transcriptional state of the region. In Drosophila melanogaster (Fruit fly), this protein is DNA repair protein complementing XP-A cells homolog (Xpac).